An 86-amino-acid polypeptide reads, in one-letter code: Large ribosomal subunit protein bL31B (86 aa).

It belongs to the bacterial ribosomal protein bL31 family. Type B subfamily. In terms of assembly, part of the 50S ribosomal subunit.

This is Large ribosomal subunit protein bL31B from Salmonella agona (strain SL483).